The primary structure comprises 220 residues: Fructose-6-phosphate aldolase 1 (220 aa).

Residue K85 is the Schiff-base intermediate with substrate of the active site.

The protein belongs to the transaldolase family. Type 3A subfamily. Homodecamer.

The protein resides in the cytoplasm. It catalyses the reaction beta-D-fructose 6-phosphate = dihydroxyacetone + D-glyceraldehyde 3-phosphate. In terms of biological role, catalyzes the reversible formation of fructose 6-phosphate from dihydroxyacetone and D-glyceraldehyde 3-phosphate via an aldolization reaction. This chain is Fructose-6-phosphate aldolase 1 (fsaA), found in Escherichia coli O157:H7.